The sequence spans 503 residues: Probable cytosol aminopeptidase (503 aa).

2 residues coordinate Mn(2+): lysine 270 and aspartate 275. Lysine 282 is a catalytic residue. Mn(2+) contacts are provided by aspartate 293, aspartate 352, and glutamate 354. The active site involves arginine 356.

It belongs to the peptidase M17 family. The cofactor is Mn(2+).

The protein localises to the cytoplasm. It carries out the reaction Release of an N-terminal amino acid, Xaa-|-Yaa-, in which Xaa is preferably Leu, but may be other amino acids including Pro although not Arg or Lys, and Yaa may be Pro. Amino acid amides and methyl esters are also readily hydrolyzed, but rates on arylamides are exceedingly low.. The catalysed reaction is Release of an N-terminal amino acid, preferentially leucine, but not glutamic or aspartic acids.. In terms of biological role, presumably involved in the processing and regular turnover of intracellular proteins. Catalyzes the removal of unsubstituted N-terminal amino acids from various peptides. This is Probable cytosol aminopeptidase from Pectobacterium atrosepticum (strain SCRI 1043 / ATCC BAA-672) (Erwinia carotovora subsp. atroseptica).